The following is a 507-amino-acid chain: ATP synthase subunit alpha, chloroplastic (507 aa).

Position 170 to 177 (170 to 177 (GDRQTGKA)) interacts with ATP.

This sequence belongs to the ATPase alpha/beta chains family. F-type ATPases have 2 components, CF(1) - the catalytic core - and CF(0) - the membrane proton channel. CF(1) has five subunits: alpha(3), beta(3), gamma(1), delta(1), epsilon(1). CF(0) has four main subunits: a, b, b' and c.

The protein resides in the plastid. It localises to the chloroplast thylakoid membrane. The enzyme catalyses ATP + H2O + 4 H(+)(in) = ADP + phosphate + 5 H(+)(out). Its function is as follows. Produces ATP from ADP in the presence of a proton gradient across the membrane. The alpha chain is a regulatory subunit. In Calycanthus floridus var. glaucus (Eastern sweetshrub), this protein is ATP synthase subunit alpha, chloroplastic.